The sequence spans 93 residues: Integration host factor subunit beta (93 aa).

It belongs to the bacterial histone-like protein family. In terms of assembly, heterodimer of an alpha and a beta chain.

Its function is as follows. This protein is one of the two subunits of integration host factor, a specific DNA-binding protein that functions in genetic recombination as well as in transcriptional and translational control. The chain is Integration host factor subunit beta from Tolumonas auensis (strain DSM 9187 / NBRC 110442 / TA 4).